The sequence spans 199 residues: uncharacterized protein (199 aa).

The Nudix hydrolase domain maps to 38 to 169 (NRRAAVLIPI…SLDIHREGIN (132 aa)). The short motif at 76-98 (GKADPDDQSLISTALREAEEEVA) is the Nudix box element. Mg(2+)-binding residues include E92 and E96.

Belongs to the Nudix hydrolase family. PCD1 subfamily. It depends on Mn(2+) as a cofactor. Mg(2+) is required as a cofactor.

Its function is as follows. Probably mediates the hydrolysis of some nucleoside diphosphate derivatives. This is an uncharacterized protein from Yersinia pseudotuberculosis serotype I (strain IP32953).